The chain runs to 368 residues: uncharacterized protein (368 aa).

Disordered regions lie at residues 1-22 and 282-317; these read MEKSSNTTGSGGPKSDSQLPEK and KHLGRRSKKAQKRVEKMKKAYKESKEEKASSQEPPA. Over residues 293–311 the composition is skewed to basic and acidic residues; sequence KRVEKMKKAYKESKEEKAS.

This is an uncharacterized protein from Mus musculus (Mouse).